A 1047-amino-acid polypeptide reads, in one-letter code: MAVTLDKDAYYRRVKRLYSNWRKGEDEYASIDAIVVSVGVDEEIVYAKSTALQTWLFGYELTDTIMVFCDDKIIFMASKKKVEFLKQIANTKGNENANGAPAITLLVREKNESNKSSFDKMIDAIKESKSGKKIGVFSKDKFPGEFMKSWSDCLNKEGFDKVDISAVVAYTIAVKEDGELNLMKKAASITSEVFNKFFKERVMEIVDADEKVRHSKLAESVEKAIEEKKYLAGADPSTVEMCYPPIIQSGGNYNLKFSVVSDKNHMHFGAITCAMGIRFKSYCSNLVRTLMVDPTQEVQENYNFLLQLQEELLKELRHGVKICDVYNSVMDVVKKQKPELLNKITKNLGFGMGIEFREGSLVINSKNQYKLKKGMVFSINLGFSDLTNKEGKKPEEKTYALFIGDTVLVDEDGPATILTSVKKKVKNVGIFLKNEDDEEEEEEKDEAEDLLGRGSRAALLTERTRNEMTAEEKRRAHQKELAAQLNEEAKRRLTEQKGEQQIQKARKSNVSYKNPSLMPKEPHIREMKIYIDKKYETVIMPVFGIATPFHIATIKNISMSVEGDYTYLRINFYCPGSALGRNEGNIFPNPEATFVKEITYRASNMKAPGEQTVPALNLQNAFRIIKEVQKRYKTREAEEKEKEGIVKQDSLVINLNRSNPKLKDLYIRPNIAQKRMQGSLEAHVNGFRFTSVRGDKVDILYNNIKHALFQPCDGEMIIVLHFHLKNAVMFGKKRHTDVQFYTEVGEITTDLGKHQHMHDRDDLYAEQMEREMRHKLKTAFKNFIEKVEALTKEELEFEVPFRDLGFNGAPYRSTCLLQPTSSALVNATEWPPFVVTLDEVELIHFERVQFHLKNFDMVIVYKDYSKKVTMINAIPVASLDPIKEWLNSCDLKYTEGVQSLNWTKIMKTIVDDPEGFFEQGGWSFLEPEGEGSDAEDGDSESEIEDETFNPSEDDYEEEEEDSDEDYSSEAEESDYSKESLGSEEESGKDWDELEEEARKADRESRYEEEEEQSRSMSRKRKASVHSSGRGSNRGSRHSSAPPKKKRK.

Ala-2 bears the N-acetylalanine mark. Lys-139 is subject to N6-acetyllysine. Phosphoserine is present on Ser-188. Residues Lys-196 and Lys-223 each carry the N6-acetyllysine modification. At Ser-455 the chain carries Phosphoserine. The stretch at 465-507 (RNEMTAEEKRRAHQKELAAQLNEEAKRRLTEQKGEQQIQKARK) forms a coiled coil. The disordered stretch occupies residues 491–518 (RRLTEQKGEQQIQKARKSNVSYKNPSLM). Lys-497 is covalently cross-linked (Glycyl lysine isopeptide (Lys-Gly) (interchain with G-Cter in SUMO2)). The segment covering 499 to 514 (EQQIQKARKSNVSYKN) has biased composition (polar residues). Position 508 is a phosphoserine (Ser-508). Position 513 is an N6-acetyllysine; alternate (Lys-513). A Glycyl lysine isopeptide (Lys-Gly) (interchain with G-Cter in SUMO2); alternate cross-link involves residue Lys-513. A Glycyl lysine isopeptide (Lys-Gly) (interchain with G-Cter in SUMO2) cross-link involves residue Lys-647. A phosphoserine mark is found at Ser-650 and Ser-658. N6-acetyllysine is present on residues Lys-732 and Lys-786. Position 903 is a phosphothreonine (Thr-903). Lys-904 carries the N6-acetyllysine modification. The interval 918–1047 (EQGGWSFLEP…SSAPPKKKRK (130 aa)) is disordered. Residues 927–973 (PEGEGSDAEDGDSESEIEDETFNPSEDDYEEEEEDSDEDYSSEAEES) are compositionally biased toward acidic residues. A phosphoserine mark is found at Ser-979, Ser-982, Ser-986, and Ser-1015. The segment covering 985-1005 (ESGKDWDELEEEARKADRESR) has biased composition (basic and acidic residues). The segment covering 1024–1039 (VHSSGRGSNRGSRHSS) has biased composition (low complexity).

It belongs to the peptidase M24 family. SPT16 subfamily. Interacts with MYOG (via C-terminal region). Component of the FACT complex, a stable heterodimer of SSRP1 and SUPT16H. Also a component of a CK2-SPT16-SSRP1 complex which forms following UV irradiation, composed of SSRP1, SUPT16H, CSNK2A1, CSNK2A2 and CSNK2B. Interacts with NEK9. Binds to histone H2A-H2B. Identified in a centromere complex containing histones H2A, H2B and H4, and at least CENPA, CENPB, CENPC, CENPT, CENPN, HJURP, SUPT16H, SSRP1 and RSF1. Interacts with GTF2E2. Post-translationally, ADP-ribosylated. ADP-ribosylation by PARP1 is induced by genotoxic stress and correlates with dissociation of FACT from chromatin. In terms of tissue distribution, widely expressed. Expressed in brain, liver, heart, kidneys, lungs, spleen, thymus, ovary, and testes, with highest levels of expression observed in thymus.

The protein resides in the nucleus. Its subcellular location is the chromosome. Functionally, component of the FACT complex, a general chromatin factor that acts to reorganize nucleosomes. The FACT complex is involved in multiple processes that require DNA as a template such as mRNA elongation, DNA replication and DNA repair. During transcription elongation the FACT complex acts as a histone chaperone that both destabilizes and restores nucleosomal structure. It facilitates the passage of RNA polymerase II and transcription by promoting the dissociation of one histone H2A-H2B dimer from the nucleosome, then subsequently promotes the reestablishment of the nucleosome following the passage of RNA polymerase II. The FACT complex is probably also involved in phosphorylation of 'Ser-392' of p53/TP53 via its association with CK2 (casein kinase II). The sequence is that of FACT complex subunit SPT16 (Supt16h) from Mus musculus (Mouse).